Consider the following 439-residue polypeptide: DNA 3'-5' translocase XPB2 (439 aa).

A DRD domain region spans residues 1–54 (MVYLRYFKGLILSDAYAPGLKWSDELKAYSALAFKYRDVRKYFLEKEIEVEENV). Positions 77–221 (VKAWLKEKRG…LYPILVGPIV (145 aa)) constitute a Helicase ATP-binding domain. ATP-binding positions include 90-97 (LPTGAGKT) and arginine 127. Positions 174-177 (DEVH) match the DEAH box motif. The RED motif motif lies at 205–207 (RDD). Positions 227–234 (EELAGKYI) are flexible hinge region. The tract at residues 248–307 (NEEKKRYDGLRKKLKDFLSSRGLKLQNLDDFHRLVKLAAKDKEAREALLAWHESLNIAVN) is thM region. The 129-residue stretch at 311–439 (KIEKLREILQ…DYRLSRRRRE (129 aa)) folds into the Helicase C-terminal domain.

Belongs to the helicase family. RAD25/XPB subfamily. Forms a heterodimer with Bax1.

The enzyme catalyses Couples ATP hydrolysis with the unwinding of duplex DNA by translocating in the 3'-5' direction.. It catalyses the reaction ATP + H2O = ADP + phosphate + H(+). In terms of biological role, ATP-dependent DNA translocase which moves along double-stranded DNA (dsDNA) in a 3'-5' direction, unwinding the DNA. The ThM domain grips the resulting 3'-ssDNA tail and functions as a wedge (particularly Phe-278), breaking dsDNA base pairs, probably using the energy from ATP hydrolysis to move along dsDNA. A DNA-dependent ATPase; double-stranded DNA (dsDNA) stimulates the activity more than single-stranded DNA (ssDNA), while Bax1 stimulates ATPase more. In an in vitro assay had no detectable helicase activity. Binds ssDNA better than dsDNA. Has very low ATPase activity that is stimulated by Bax1; dsDNA, Y-form DNA and a DNA substrate with a 6 base pair (bp) bubble in the center stimulate the XPB2-Bax1 ATPase activity about 10- 20-fold more than the absence of DNA. In an XPB2-Bax1-bubble DNA crystal (12 bp of dsDNA, a 6 base bubble and 6 bp of dsDNA) the short 6 bp arm is unwound. The 2 helicase and the ThM domains of XPB2 with the NTD and CRD domains of Bax1 encircle the DNA, forming a tunnel where the 12 bp dsDNA and the ds-ssDNA junction are located. The ThM domain is wedged between the ssDNA tails, with the 5' ssDNA contacting Bax1 and the 3' ssDNA in a channel in XPB2. Bax1 increases the affinity of XPB2 for forked DNA. This Sulfurisphaera tokodaii (strain DSM 16993 / JCM 10545 / NBRC 100140 / 7) (Sulfolobus tokodaii) protein is DNA 3'-5' translocase XPB2.